The following is a 356-amino-acid chain: CLIP domain-containing serine protease C9 (356 aa).

The 46-residue stretch at 49 to 94 folds into the Clip domain; sequence SCDTPQVIGGKCMNISLCDPAFVHSIAYQEHTPVCQQNAFYRVICC. 4 cysteine pairs are disulfide-bonded: Cys-50/Cys-93, Cys-60/Cys-83, Cys-66/Cys-94, and Cys-139/Cys-155. N-linked (GlcNAc...) asparagine glycosylation is present at Asn-62. Residues 109–351 enclose the Peptidase S1 domain; it reads IMHGIEAEPG…YFGWIKETVS (243 aa). Active-site charge relay system residues include His-154 and Asp-194. Cys-258 and Cys-284 are disulfide-bonded. The N-linked (GlcNAc...) asparagine glycan is linked to Asn-292. Cys-300 and Cys-328 are joined by a disulfide. Ser-304 serves as the catalytic Charge relay system.

Belongs to the peptidase S1 family. CLIP subfamily. In terms of assembly, in the active form, heterodimer of a p12 subunit and a p30 subunit; disulfide-linked. Secreted as a full-length protein. Following bacterium E.coli infection, proteolytically cleaved into two chains, p12 and p30, which remain covalently linked.

The protein localises to the secreted. In terms of biological role, probable serine protease which plays an essential role in the innate immune response against bacteria and protozoa infection by activating the melanization cascade. In the susceptible strain G3, appears to be dispensable for ookinete elimination which occurs by lysis. This chain is CLIP domain-containing serine protease C9, found in Anopheles gambiae (African malaria mosquito).